Here is a 379-residue protein sequence, read N- to C-terminus: Cytochrome b (379 aa).

The next 4 helical transmembrane spans lie at 33–53 (FGSLLGMCLVIQILTGLFLAM), 77–98 (WLIRYLHANGASMFFICLFIHV), 113–133 (WNIGIILLLTTMATAFVGYVL), and 178–198 (FFAFHFILPFIIAAFALVHLL). Heme b-binding residues include His-83 and His-97. Heme b-binding residues include His-182 and His-196. His-201 is a binding site for a ubiquinone. 4 helical membrane passes run 226–246 (TKDLLGIFLLLLVLMILALFF), 288–308 (LGGVLALVLSILILAAFPLLN), 320–340 (VTQVIYWIFIANLLVLTWIGG), and 347–367 (FTTIGQIASVTYFATIIILIP).

Belongs to the cytochrome b family. As to quaternary structure, the cytochrome bc1 complex contains 11 subunits: 3 respiratory subunits (MT-CYB, CYC1 and UQCRFS1), 2 core proteins (UQCRC1 and UQCRC2) and 6 low-molecular weight proteins (UQCRH/QCR6, UQCRB/QCR7, UQCRQ/QCR8, UQCR10/QCR9, UQCR11/QCR10 and a cleavage product of UQCRFS1). This cytochrome bc1 complex then forms a dimer. Heme b serves as cofactor.

The protein localises to the mitochondrion inner membrane. Its function is as follows. Component of the ubiquinol-cytochrome c reductase complex (complex III or cytochrome b-c1 complex) that is part of the mitochondrial respiratory chain. The b-c1 complex mediates electron transfer from ubiquinol to cytochrome c. Contributes to the generation of a proton gradient across the mitochondrial membrane that is then used for ATP synthesis. The polypeptide is Cytochrome b (MT-CYB) (Akodon montensis (Montane grass mouse)).